The sequence spans 877 residues: Kinetochore null protein 2 (877 aa).

One can recognise an SANTA domain in the interval 20–107 (IRLNLWSMKF…SNGIPENWAD (88 aa)). Disordered stretches follow at residues 122–315 (RPIQ…SKSV), 338–535 (FEST…ESLN), and 549–604 (MMFG…NDSI). Residues 153–211 (QKNSENEKERNRREREEQQTKERERRLEEEKQRRDAEAEAERRRKEEEELEEANYTLRA) are a coiled coil. A compositionally biased stretch (basic and acidic residues) spans 156 to 199 (SENEKERNRREREEQQTKERERRLEEEKQRRDAEAEAERRRKEE). Positions 251 to 279 (IASSTPQQKQRLADGANNQIPPTQKSQDS) are enriched in polar residues. 3 stretches are compositionally biased toward basic and acidic residues: residues 359–385 (EPRH…DNSR), 394–444 (RRHE…RGRD), and 453–480 (VRFE…DYGR). A coiled-coil region spans residues 491 to 549 (EDEEKLNAIVRREKELRNRLQKSQKASSSSYRHRSNSSDAEESLNEWDIENQELLDNSM). A compositionally biased stretch (low complexity) spans 511 to 520 (QKSQKASSSS). Residues 573 to 583 (RSKPANSTKSP) are compositionally biased toward polar residues. Over residues 592–601 (ASLEDNRDLN) the composition is skewed to basic and acidic residues. The Myb-like domain occupies 617-678 (VAKKITWRKQ…AITRLKWVEP (62 aa)). 2 disordered regions span residues 757-785 (RGGT…FNSP) and 808-877 (MQAR…TSIY). 2 stretches are compositionally biased toward polar residues: residues 775–785 (SRGNNSTFNSP) and 819–836 (SSSM…TSIS). Positions 856–871 (EDDENEDNDDDDDMRE) are enriched in acidic residues.

This sequence belongs to the KNL2 family. In terms of assembly, interacts with hcp-3.

The protein resides in the nucleus. It is found in the chromosome. It localises to the centromere. Its subcellular location is the kinetochore. Required for the recruitment of hcp-3, hcp-4, knl-1, bub-1 and lin-53 to kinetochores, kinetochore assembly, chromosome condensation and chromosome segregation in meiosis and mitosis. The sequence is that of Kinetochore null protein 2 from Caenorhabditis elegans.